A 270-amino-acid chain; its full sequence is Ribosomal RNA small subunit methyltransferase A (270 aa).

6 residues coordinate S-adenosyl-L-methionine: N16, L18, G43, E64, D89, and N110.

Belongs to the class I-like SAM-binding methyltransferase superfamily. rRNA adenine N(6)-methyltransferase family. RsmA subfamily.

It is found in the cytoplasm. The catalysed reaction is adenosine(1518)/adenosine(1519) in 16S rRNA + 4 S-adenosyl-L-methionine = N(6)-dimethyladenosine(1518)/N(6)-dimethyladenosine(1519) in 16S rRNA + 4 S-adenosyl-L-homocysteine + 4 H(+). Specifically dimethylates two adjacent adenosines (A1518 and A1519) in the loop of a conserved hairpin near the 3'-end of 16S rRNA in the 30S particle. May play a critical role in biogenesis of 30S subunits. The protein is Ribosomal RNA small subunit methyltransferase A of Pseudomonas fluorescens (strain ATCC BAA-477 / NRRL B-23932 / Pf-5).